Consider the following 159-residue polypeptide: MNITIISVGKIKEKYLSDAINEYSKRISRYSKIDIIEVADEKTPENPSEVEKSKILEKEAERILKYLKKDSFLITLEILGKELTSESLAKKINDLSISGKSDITFIIGGSLGLSKNISEISDFKLSFSKMTFPHQLMRVILLEQVYRSFRIINGEPYHK.

S-adenosyl-L-methionine is bound by residues Leu76, Gly108, and 127-132 (FSKMTF).

The protein belongs to the RNA methyltransferase RlmH family.

Its subcellular location is the cytoplasm. The catalysed reaction is pseudouridine(1915) in 23S rRNA + S-adenosyl-L-methionine = N(3)-methylpseudouridine(1915) in 23S rRNA + S-adenosyl-L-homocysteine + H(+). In terms of biological role, specifically methylates the pseudouridine at position 1915 (m3Psi1915) in 23S rRNA. This is Putative ribosomal RNA large subunit methyltransferase H from Methanococcus maripaludis (strain C7 / ATCC BAA-1331).